Consider the following 338-residue polypeptide: Phosphatidylglycerol--prolipoprotein diacylglyceryl transferase (338 aa).

4 consecutive transmembrane segments (helical) span residues 24 to 44 (WYGLMYLVAFGIAYFLFSYQV), 67 to 87 (LFIWGILGLILGARIFGTLVY), 115 to 135 (GFQGMSYHGGFIGGFLGVILW), and 141 to 161 (FKFAAVADLMAVSIPLGYTFG). Arg162 contributes to the a 1,2-diacyl-sn-glycero-3-phospho-(1'-sn-glycerol) binding site. Helical transmembrane passes span 224–244 (PSQLYEAFFEGIILWLILWLL), 252–272 (GFLVCVYTLGYGFFRFFIEYF), and 304–324 (GQILCSLMILASLAAMLILYL).

It belongs to the Lgt family.

The protein localises to the cell inner membrane. It catalyses the reaction L-cysteinyl-[prolipoprotein] + a 1,2-diacyl-sn-glycero-3-phospho-(1'-sn-glycerol) = an S-1,2-diacyl-sn-glyceryl-L-cysteinyl-[prolipoprotein] + sn-glycerol 1-phosphate + H(+). It functions in the pathway protein modification; lipoprotein biosynthesis (diacylglyceryl transfer). In terms of biological role, catalyzes the transfer of the diacylglyceryl group from phosphatidylglycerol to the sulfhydryl group of the N-terminal cysteine of a prolipoprotein, the first step in the formation of mature lipoproteins. This Treponema denticola (strain ATCC 35405 / DSM 14222 / CIP 103919 / JCM 8153 / KCTC 15104) protein is Phosphatidylglycerol--prolipoprotein diacylglyceryl transferase.